The primary structure comprises 197 residues: Holliday junction branch migration complex subunit RuvA (197 aa).

Residues 1 to 64 (MIGRISGLLL…EDAHLLFGFA (64 aa)) form a domain I region. The domain II stretch occupies residues 65–142 (TEGERQAFRQ…DLGVSAIPGA (78 aa)). The tract at residues 143 to 153 (AGARRPSTMGS) is flexible linker. The domain III stretch occupies residues 153 to 197 (SDVLNALLSLGYNDREANWAVSQLSVDLSVSDGIRQALKFLSKEK).

It belongs to the RuvA family. In terms of assembly, homotetramer. Forms an RuvA(8)-RuvB(12)-Holliday junction (HJ) complex. HJ DNA is sandwiched between 2 RuvA tetramers; dsDNA enters through RuvA and exits via RuvB. An RuvB hexamer assembles on each DNA strand where it exits the tetramer. Each RuvB hexamer is contacted by two RuvA subunits (via domain III) on 2 adjacent RuvB subunits; this complex drives branch migration. In the full resolvosome a probable DNA-RuvA(4)-RuvB(12)-RuvC(2) complex forms which resolves the HJ.

The protein resides in the cytoplasm. Its function is as follows. The RuvA-RuvB-RuvC complex processes Holliday junction (HJ) DNA during genetic recombination and DNA repair, while the RuvA-RuvB complex plays an important role in the rescue of blocked DNA replication forks via replication fork reversal (RFR). RuvA specifically binds to HJ cruciform DNA, conferring on it an open structure. The RuvB hexamer acts as an ATP-dependent pump, pulling dsDNA into and through the RuvAB complex. HJ branch migration allows RuvC to scan DNA until it finds its consensus sequence, where it cleaves and resolves the cruciform DNA. The sequence is that of Holliday junction branch migration complex subunit RuvA from Nitrosospira multiformis (strain ATCC 25196 / NCIMB 11849 / C 71).